Reading from the N-terminus, the 65-residue chain is Large ribosomal subunit protein bL35 (65 aa).

The tract at residues Met1 to Gln26 is disordered. Residues Ala10–Gln26 are compositionally biased toward basic residues.

Belongs to the bacterial ribosomal protein bL35 family.

The polypeptide is Large ribosomal subunit protein bL35 (Haemophilus ducreyi (strain 35000HP / ATCC 700724)).